Consider the following 208-residue polypeptide: Probable Brix domain-containing ribosomal biogenesis protein (208 aa).

Positions 1-196 constitute a Brix domain; sequence MMLITTSHRP…IWIMEDGRRW (196 aa).

In terms of biological role, probably involved in the biogenesis of the ribosome. The chain is Probable Brix domain-containing ribosomal biogenesis protein from Thermococcus kodakarensis (strain ATCC BAA-918 / JCM 12380 / KOD1) (Pyrococcus kodakaraensis (strain KOD1)).